The sequence spans 1358 residues: DNA-directed RNA polymerase subunit beta (1358 aa).

The protein belongs to the RNA polymerase beta chain family. The RNAP catalytic core consists of 2 alpha, 1 beta, 1 beta' and 1 omega subunit. When a sigma factor is associated with the core the holoenzyme is formed, which can initiate transcription.

The catalysed reaction is RNA(n) + a ribonucleoside 5'-triphosphate = RNA(n+1) + diphosphate. Functionally, DNA-dependent RNA polymerase catalyzes the transcription of DNA into RNA using the four ribonucleoside triphosphates as substrates. This chain is DNA-directed RNA polymerase subunit beta, found in Methylococcus capsulatus (strain ATCC 33009 / NCIMB 11132 / Bath).